A 176-amino-acid chain; its full sequence is Dual-action ribosomal maturation protein DarP (176 aa).

Belongs to the DarP family.

The protein resides in the cytoplasm. In terms of biological role, member of a network of 50S ribosomal subunit biogenesis factors which assembles along the 30S-50S interface, preventing incorrect 23S rRNA structures from forming. Promotes peptidyl transferase center (PTC) maturation. This is Dual-action ribosomal maturation protein DarP from Actinobacillus pleuropneumoniae serotype 5b (strain L20).